A 907-amino-acid chain; its full sequence is Protein translocase subunit SecA (907 aa).

Residues Gln-87, 105 to 109, and Asp-512 each bind ATP; that span reads GEGKT. The segment at 834 to 907 is disordered; it reads QEDVERMEEQ…KKYKQCHGKI (74 aa). 2 stretches are compositionally biased toward basic and acidic residues: residues 836-853 and 873-888; these read DVER…EAAR and EEAH…KVGR. 4 residues coordinate Zn(2+): Cys-892, Cys-894, Cys-903, and His-904. Positions 898 to 907 are enriched in basic residues; sequence KKYKQCHGKI.

This sequence belongs to the SecA family. As to quaternary structure, monomer and homodimer. Part of the essential Sec protein translocation apparatus which comprises SecA, SecYEG and auxiliary proteins SecDF-YajC and YidC. The cofactor is Zn(2+).

The protein localises to the cell inner membrane. It is found in the cytoplasm. It catalyses the reaction ATP + H2O + cellular proteinSide 1 = ADP + phosphate + cellular proteinSide 2.. Its function is as follows. Part of the Sec protein translocase complex. Interacts with the SecYEG preprotein conducting channel. Has a central role in coupling the hydrolysis of ATP to the transfer of proteins into and across the cell membrane, serving both as a receptor for the preprotein-SecB complex and as an ATP-driven molecular motor driving the stepwise translocation of polypeptide chains across the membrane. This is Protein translocase subunit SecA from Aliivibrio fischeri (strain ATCC 700601 / ES114) (Vibrio fischeri).